Here is a 152-residue protein sequence, read N- to C-terminus: UPF0179 protein HQ_3004A (152 aa).

Belongs to the UPF0179 family.

The protein is UPF0179 protein HQ_3004A of Haloquadratum walsbyi (strain DSM 16790 / HBSQ001).